The following is a 341-amino-acid chain: Anthranilate phosphoribosyltransferase (341 aa).

5-phospho-alpha-D-ribose 1-diphosphate contacts are provided by residues G79, G82–D83, T87, N89–T92, K107–S115, and S119. Position 79 (G79) interacts with anthranilate. S91 serves as a coordination point for Mg(2+). N110 provides a ligand contact to anthranilate. R165 provides a ligand contact to anthranilate. Residues D224 and E225 each coordinate Mg(2+).

Belongs to the anthranilate phosphoribosyltransferase family. In terms of assembly, homodimer. Mg(2+) serves as cofactor.

It carries out the reaction N-(5-phospho-beta-D-ribosyl)anthranilate + diphosphate = 5-phospho-alpha-D-ribose 1-diphosphate + anthranilate. It functions in the pathway amino-acid biosynthesis; L-tryptophan biosynthesis; L-tryptophan from chorismate: step 2/5. In terms of biological role, catalyzes the transfer of the phosphoribosyl group of 5-phosphorylribose-1-pyrophosphate (PRPP) to anthranilate to yield N-(5'-phosphoribosyl)-anthranilate (PRA). The sequence is that of Anthranilate phosphoribosyltransferase from Symbiobacterium thermophilum (strain DSM 24528 / JCM 14929 / IAM 14863 / T).